The following is a 322-amino-acid chain: 3-hydroxyacyl-CoA dehydrogenase FVEG_12628 (322 aa).

A helical membrane pass occupies residues 5-25 (IRTVAIVGCGVIGMGWAVLFL). Glu-151 (for hydroxyacyl-coenzyme A dehydrogenase activity) is an active-site residue.

It belongs to the 3-hydroxyacyl-CoA dehydrogenase family.

It is found in the membrane. Its function is as follows. 3-hydroxyacyl-CoA dehydrogenase; part of the Fusarium detoxification of benzoxazolinone cluster 2 (FDB2) involved in the degradation of benzoxazolinones produced by the host plant. Maize, wheat, and rye produce the 2 benzoxazinone phytoanticipins 2,4-dihy-droxy-7-methoxy-1,4-benzoxazin-3-one (DIMBOA) and 2,4-dihydroxy-1,4-benzoxazin-3-one (DIBOA) that, due to their inherent instability once released, spontaneously degrade to the more stable corresponding benzoxazolinones, 6-methoxy-2-benzoxazolinone (MBOA) and 2-benzoxazolinone (BOA), respectively. The first step in the detoxification of benzoxazolinones involves the hydrolysis of the cyclic ester bond of benzoxazolinones by the FDB1 cluster gamma-lactamase MBL1 to aminophenols. MBL1 is able to convert BOA into 2-aminophenol (2-AP), as well as MBOA into 5-methoxy-2-aminophenol (2-AMP). The FDB2 cluster N-malonyltransferase FDB2/NAT1 then metabolizes aminophenols via N-malonylation to non-toxic malonamic acids. FDB2/NAT1 converts 2-AP into N-(2-hydroxyphenyl) malonamic acid (HPMA) and 2-AMP into N-(2-hydroxy-4-methoxyphenyl) malonamic acid (HMPMA). The duplicated dienlactone hydrolases DLH1 and DLH2 may provide redundant function for hydrolyzing the lactone moiety in the BOA molecule. The roles of the amidases an other enzymes encoded by the 2 FDB clusters have not been identified so far. The sequence is that of 3-hydroxyacyl-CoA dehydrogenase FVEG_12628 from Gibberella moniliformis (strain M3125 / FGSC 7600) (Maize ear and stalk rot fungus).